The following is a 263-amino-acid chain: MARGPKKHLKRVAAPKHWMLDKLTGVFAPRPSTGPHKLRECLPLIIFLRNRLKYALTGDEVKKICMQRFIKIDGKVRTDITYPAGFMDVISIEKTGEHFRLVYDTKGRFAVHRITSEEAKYKLCKVRKTWVGTKGIPHLVTHDARTIRYPDPLIKVNDTIQIDLETGKITDFIKFDTGNLCMVTGGANLGRIGVITNRERHPGSFDVVHVKDANGNNFATRLSNIFVIGKGNKPWISLPRGKGIRLTIAEERDKRLAAKQSSG.

One can recognise an S4 RNA-binding domain in the interval 42–104 (LPLIIFLRNR…TGEHFRLVYD (63 aa)).

It belongs to the eukaryotic ribosomal protein eS4 family. As to quaternary structure, component of the small ribosomal subunit.

Its subcellular location is the cytoplasm. Component of the small ribosomal subunit. The ribosome is a large ribonucleoprotein complex responsible for the synthesis of proteins in the cell. The sequence is that of Small ribosomal subunit protein eS4 (rps4) from Xenopus laevis (African clawed frog).